The primary structure comprises 309 residues: Extracellular agarase (309 aa).

The segment at residues Met-1–Ala-30 is a signal peptide (tat-type signal). In terms of domain architecture, GH16 spans Leu-33–Val-309. Catalysis depends on Glu-155, which acts as the Nucleophile. Residue Glu-160 is the Proton donor of the active site.

The protein belongs to the glycosyl hydrolase 16 family. In terms of processing, predicted to be exported by the Tat system. The position of the signal peptide cleavage has been experimentally proven.

It localises to the secreted. The enzyme catalyses Hydrolysis of (1-&gt;4)-beta-D-galactosidic linkages in agarose, giving the tetramer as the predominant product.. This chain is Extracellular agarase (dagA), found in Streptomyces coelicolor (strain ATCC BAA-471 / A3(2) / M145).